A 550-amino-acid polypeptide reads, in one-letter code: Dihydroxy-acid dehydratase (550 aa).

Position 78 (Asp78) interacts with Mg(2+). Position 119 (Cys119) interacts with [2Fe-2S] cluster. Mg(2+)-binding residues include Asp120 and Lys121. Lys121 carries the post-translational modification N6-carboxylysine. Cys191 contributes to the [2Fe-2S] cluster binding site. Glu440 contributes to the Mg(2+) binding site. Catalysis depends on Ser466, which acts as the Proton acceptor.

Belongs to the IlvD/Edd family. Homodimer. The cofactor is [2Fe-2S] cluster. It depends on Mg(2+) as a cofactor.

The enzyme catalyses (2R)-2,3-dihydroxy-3-methylbutanoate = 3-methyl-2-oxobutanoate + H2O. The catalysed reaction is (2R,3R)-2,3-dihydroxy-3-methylpentanoate = (S)-3-methyl-2-oxopentanoate + H2O. It participates in amino-acid biosynthesis; L-isoleucine biosynthesis; L-isoleucine from 2-oxobutanoate: step 3/4. It functions in the pathway amino-acid biosynthesis; L-valine biosynthesis; L-valine from pyruvate: step 3/4. Its function is as follows. Functions in the biosynthesis of branched-chain amino acids. Catalyzes the dehydration of (2R,3R)-2,3-dihydroxy-3-methylpentanoate (2,3-dihydroxy-3-methylvalerate) into 2-oxo-3-methylpentanoate (2-oxo-3-methylvalerate) and of (2R)-2,3-dihydroxy-3-methylbutanoate (2,3-dihydroxyisovalerate) into 2-oxo-3-methylbutanoate (2-oxoisovalerate), the penultimate precursor to L-isoleucine and L-valine, respectively. This is Dihydroxy-acid dehydratase from Methanococcus vannielii (strain ATCC 35089 / DSM 1224 / JCM 13029 / OCM 148 / SB).